We begin with the raw amino-acid sequence, 308 residues long: Phosphoribosylaminoimidazole-succinocarboxamide synthase (308 aa).

Belongs to the SAICAR synthetase family.

It carries out the reaction 5-amino-1-(5-phospho-D-ribosyl)imidazole-4-carboxylate + L-aspartate + ATP = (2S)-2-[5-amino-1-(5-phospho-beta-D-ribosyl)imidazole-4-carboxamido]succinate + ADP + phosphate + 2 H(+). Its pathway is purine metabolism; IMP biosynthesis via de novo pathway; 5-amino-1-(5-phospho-D-ribosyl)imidazole-4-carboxamide from 5-amino-1-(5-phospho-D-ribosyl)imidazole-4-carboxylate: step 1/2. The protein is Phosphoribosylaminoimidazole-succinocarboxamide synthase of Stenotrophomonas maltophilia (strain R551-3).